A 350-amino-acid chain; its full sequence is Galactokinase (350 aa).

Glu15–Asp18 is a substrate binding site. Residues Ser47 and Gly99–Ser105 each bind ATP. Mg(2+)-binding residues include Ser105 and Glu137. Asp149 acts as the Proton acceptor in catalysis. A substrate-binding site is contributed by Tyr198.

The protein belongs to the GHMP kinase family. GalK subfamily.

It is found in the cytoplasm. It carries out the reaction alpha-D-galactose + ATP = alpha-D-galactose 1-phosphate + ADP + H(+). It participates in carbohydrate metabolism; galactose metabolism. Functionally, catalyzes the transfer of the gamma-phosphate of ATP to D-galactose to form alpha-D-galactose-1-phosphate (Gal-1-P). This chain is Galactokinase, found in Pyrococcus horikoshii (strain ATCC 700860 / DSM 12428 / JCM 9974 / NBRC 100139 / OT-3).